The chain runs to 200 residues: MQLKRVAEAKLPTPWGDFLMVGFEELATGQDHVALVYGDISGQSPVLARVHSECLTGDALFSLRCDCGFQLEAALSHIAEEGRGILLYHRQEGRNIGLLNKIRAYALQDQGYDTVEANHQLGFAADERDFTLCADMFKLLNVEQVRLLTNNPKKVEILTEAGINIVERVPLIVGRNPKNAHYLDTKAAKMGHLLNSKPTE.

Residue 49-53 (RVHSE) coordinates GTP. Positions 54, 65, and 67 each coordinate Zn(2+). Residues Q70, 92 to 94 (EGR), and T114 contribute to the GTP site. The Proton acceptor role is filled by D126. The active-site Nucleophile is the R128. GTP contacts are provided by T149 and K154.

This sequence belongs to the GTP cyclohydrolase II family. In terms of assembly, homodimer. It depends on Zn(2+) as a cofactor.

The catalysed reaction is GTP + 4 H2O = 2,5-diamino-6-hydroxy-4-(5-phosphoribosylamino)-pyrimidine + formate + 2 phosphate + 3 H(+). The protein operates within cofactor biosynthesis; riboflavin biosynthesis; 5-amino-6-(D-ribitylamino)uracil from GTP: step 1/4. Catalyzes the conversion of GTP to 2,5-diamino-6-ribosylamino-4(3H)-pyrimidinone 5'-phosphate (DARP), formate and pyrophosphate. The protein is GTP cyclohydrolase-2 of Klebsiella pneumoniae subsp. pneumoniae (strain ATCC 700721 / MGH 78578).